A 321-amino-acid polypeptide reads, in one-letter code: Solute carrier family 25 member 33 (321 aa).

Solcar repeat units lie at residues 9–118 (ENTL…AKEQ), 126–213 (NSNI…LKKY), and 231–315 (TNFF…IVYL). 6 helical membrane passes run 12 to 32 (LLHL…TCPL), 49 to 65 (VYYP…AGVV), 121 to 141 (GVFV…AAFV), 190 to 210 (LTAS…YESL), 233 to 253 (FFGL…VAYP), and 298 to 318 (QIPN…LLED).

This sequence belongs to the mitochondrial carrier (TC 2.A.29) family.

It localises to the mitochondrion inner membrane. It carries out the reaction UTP(in) + UDP(out) = UTP(out) + UDP(in). It catalyses the reaction dUTP(out) + UTP(in) = dUTP(in) + UTP(out). The catalysed reaction is 5-methyl-UTP(out) + UTP(in) = 5-methyl-UTP(in) + UTP(out). The enzyme catalyses 5-methyl-UDP(out) + UTP(in) = 5-methyl-UDP(in) + UTP(out). It carries out the reaction UTP(in) + CTP(out) = UTP(out) + CTP(in). It catalyses the reaction CDP(out) + UTP(in) = CDP(in) + UTP(out). The catalysed reaction is dCTP(out) + UTP(in) = dCTP(in) + UTP(out). The enzyme catalyses dCDP(out) + UTP(in) = dCDP(in) + UTP(out). It carries out the reaction UTP(in) + GTP(out) = UTP(out) + GTP(in). It catalyses the reaction UTP(in) + GDP(out) = UTP(out) + GDP(in). The catalysed reaction is dGTP(out) + UTP(in) = dGTP(in) + UTP(out). The enzyme catalyses dGDP(out) + UTP(in) = dGDP(in) + UTP(out). It carries out the reaction ITP(out) + UTP(in) = ITP(in) + UTP(out). Functionally, mitochondrial transporter that imports/exports pyrimidine nucleotides into and from mitochondria. Selectively transports uridine, thymidine, guanosine, cytosine and inosine (deoxy)nucleoside di- and triphosphates by an antiport mechanism. May import (deoxy)nucleoside triphosphates in exchange for intramitochondrial (deoxy)nucleoside diphosphates, thus providing precursors necessary for de novo synthesis of mitochondrial DNA and RNA while exporting products of their catabolism. Participates in mitochondrial genome maintenance, regulation of mitochondrial membrane potential and mitochondrial respiration. Upon INS or IGF1 stimulation regulates cell growth and proliferation by controlling mitochondrial DNA replication and transcription, the ratio of mitochondria-to nuclear-encoded components of the electron transport chain resulting in control of mitochondrial ROS production. Participates in dendritic cell endocytosis and may associate with mitochondrial oxidative phosphorylation. This Bos taurus (Bovine) protein is Solute carrier family 25 member 33 (SLC25A33).